The following is a 256-amino-acid chain: 5-keto-4-deoxy-D-glucarate aldolase (256 aa).

His-50 (proton acceptor) is an active-site residue. Gln-151 lines the substrate pocket. Position 153 (Glu-153) interacts with Mg(2+). Residues Ser-178 and Asp-179 each coordinate substrate. Asp-179 contributes to the Mg(2+) binding site.

This sequence belongs to the HpcH/HpaI aldolase family. KDGluc aldolase subfamily. In terms of assembly, homohexamer; trimer of dimers. Mg(2+) is required as a cofactor.

The catalysed reaction is 5-dehydro-4-deoxy-D-glucarate = 2-hydroxy-3-oxopropanoate + pyruvate. It carries out the reaction 2-dehydro-3-deoxy-D-glucarate = 2-hydroxy-3-oxopropanoate + pyruvate. It participates in carbohydrate acid metabolism; galactarate degradation; D-glycerate from galactarate: step 2/3. Functionally, catalyzes the reversible retro-aldol cleavage of both 5-keto-4-deoxy-D-glucarate and 2-keto-3-deoxy-D-glucarate to pyruvate and tartronic semialdehyde. This chain is 5-keto-4-deoxy-D-glucarate aldolase, found in Enterobacter sp. (strain 638).